The primary structure comprises 379 residues: Ribosomal RNA small subunit methyltransferase H (379 aa).

Residues 71–73, glutamate 90, aspartate 157, and histidine 164 each bind S-adenosyl-L-methionine; that span reads GGH.

The protein belongs to the methyltransferase superfamily. RsmH family.

The protein localises to the cytoplasm. The enzyme catalyses cytidine(1402) in 16S rRNA + S-adenosyl-L-methionine = N(4)-methylcytidine(1402) in 16S rRNA + S-adenosyl-L-homocysteine + H(+). Functionally, specifically methylates the N4 position of cytidine in position 1402 (C1402) of 16S rRNA. The polypeptide is Ribosomal RNA small subunit methyltransferase H (Treponema pallidum (strain Nichols)).